The sequence spans 231 residues: Large ribosomal subunit protein uL5m (231 aa).

Belongs to the universal ribosomal protein uL5 family.

The protein resides in the mitochondrion. This chain is Large ribosomal subunit protein uL5m (RPL5), found in Prototheca wickerhamii.